Reading from the N-terminus, the 445-residue chain is Trigger factor (445 aa).

The PPIase FKBP-type domain occupies Gly164–Pro249.

It belongs to the FKBP-type PPIase family. Tig subfamily.

The protein resides in the cytoplasm. It catalyses the reaction [protein]-peptidylproline (omega=180) = [protein]-peptidylproline (omega=0). Functionally, involved in protein export. Acts as a chaperone by maintaining the newly synthesized protein in an open conformation. Functions as a peptidyl-prolyl cis-trans isomerase. In Psychrobacter sp. (strain PRwf-1), this protein is Trigger factor.